A 359-amino-acid polypeptide reads, in one-letter code: Fructose-bisphosphate aldolase class 2 (359 aa).

D-glyceraldehyde 3-phosphate is bound at residue serine 62. Catalysis depends on aspartate 110, which acts as the Proton donor. 4 residues coordinate Zn(2+): histidine 111, aspartate 145, glutamate 175, and histidine 227. Glycine 228 contributes to the dihydroxyacetone phosphate binding site. Histidine 265 is a Zn(2+) binding site. Residues 266 to 268 (GGS) and 287 to 290 (NIDT) contribute to the dihydroxyacetone phosphate site.

Belongs to the class II fructose-bisphosphate aldolase family. Zn(2+) serves as cofactor.

It carries out the reaction beta-D-fructose 1,6-bisphosphate = D-glyceraldehyde 3-phosphate + dihydroxyacetone phosphate. Its pathway is carbohydrate degradation; glycolysis; D-glyceraldehyde 3-phosphate and glycerone phosphate from D-glucose: step 4/4. In terms of biological role, catalyzes the aldol condensation of dihydroxyacetone phosphate (DHAP or glycerone-phosphate) with glyceraldehyde 3-phosphate (G3P) to form fructose 1,6-bisphosphate (FBP) in gluconeogenesis and the reverse reaction in glycolysis. In Buchnera aphidicola subsp. Baizongia pistaciae (strain Bp), this protein is Fructose-bisphosphate aldolase class 2 (fbaA).